A 351-amino-acid polypeptide reads, in one-letter code: Uroporphyrinogen decarboxylase (351 aa).

Substrate contacts are provided by residues 25–29 (RQAGR), aspartate 74, tyrosine 151, serine 206, and histidine 325.

Belongs to the uroporphyrinogen decarboxylase family. As to quaternary structure, homodimer.

The protein resides in the cytoplasm. The catalysed reaction is uroporphyrinogen III + 4 H(+) = coproporphyrinogen III + 4 CO2. The protein operates within porphyrin-containing compound metabolism; protoporphyrin-IX biosynthesis; coproporphyrinogen-III from 5-aminolevulinate: step 4/4. Catalyzes the decarboxylation of four acetate groups of uroporphyrinogen-III to yield coproporphyrinogen-III. The protein is Uroporphyrinogen decarboxylase of Chlorobium phaeobacteroides (strain DSM 266 / SMG 266 / 2430).